A 382-amino-acid chain; its full sequence is Anhydro-N-acetylmuramic acid kinase (382 aa).

An ATP-binding site is contributed by 22–29 (GTSMDGVD).

It belongs to the anhydro-N-acetylmuramic acid kinase family.

It catalyses the reaction 1,6-anhydro-N-acetyl-beta-muramate + ATP + H2O = N-acetyl-D-muramate 6-phosphate + ADP + H(+). It participates in amino-sugar metabolism; 1,6-anhydro-N-acetylmuramate degradation. The protein operates within cell wall biogenesis; peptidoglycan recycling. Functionally, catalyzes the specific phosphorylation of 1,6-anhydro-N-acetylmuramic acid (anhMurNAc) with the simultaneous cleavage of the 1,6-anhydro ring, generating MurNAc-6-P. Is required for the utilization of anhMurNAc either imported from the medium or derived from its own cell wall murein, and thus plays a role in cell wall recycling. The protein is Anhydro-N-acetylmuramic acid kinase of Burkholderia lata (strain ATCC 17760 / DSM 23089 / LMG 22485 / NCIMB 9086 / R18194 / 383).